A 100-amino-acid chain; its full sequence is Vesicle-associated membrane protein 8 (100 aa).

M1 bears the N-acetylmethionine mark. Over 1-75 (MEEASEGGGN…ARKFWWKNVK (75 aa)) the chain is Cytoplasmic. Phosphoserine occurs at positions 5 and 18. In terms of domain architecture, v-SNARE coiled-coil homology spans 12-72 (RVRNLQSEVE…QKVARKFWWK (61 aa)). 3 positions are modified to phosphothreonine: T28, T48, and T54. S55 is modified (phosphoserine). Residues K64 and K68 are each lipidated ((Microbial infection) N6-stearoyl lysine). The chain crosses the membrane as a helical; Anchor for type IV membrane protein span at residues 76–96 (MIVLICVIVFIIILFIVLFAT). Topologically, residues 97 to 100 (GAFS) are vesicular.

The protein belongs to the synaptobrevin family. As to quaternary structure, forms a SNARE complex composed of VAMP8, SNAP29 and STX17 involved in fusion of autophagosome with lysosome. Found in a number of SNARE complexes with NAPA, SNAP23, SNAP25, STX1A, STX4, STX7, STX8 and VTI1B. Interacts with PICALM. SNARE complex formation and binding by PICALM are mutually exclusive processes for VAMP8. Interacts with SBF2/MTMR13. Interacts with RAB21 (in GTP-bound form) in response to starvation; the interaction probably regulates VAMP8 endolysosomal trafficking. Interacts with STX17; this interaction is increased in the absence of TMEM39A. Interacts with TRIM6. In terms of assembly, (Microbial infection) The interaction with STX17 is decreased in presence of SARS coronavirus-2/SARS-CoV-2 ORF3A protein. Post-translationally, (Microbial infection) Stearoylated By S.flexneri N-epsilon-fatty acyltransferase IcsB, thereby disrupting the host actin cytoskeleton. As to expression, platelets.

It localises to the lysosome membrane. The protein resides in the early endosome membrane. Its subcellular location is the late endosome membrane. It is found in the cell membrane. The protein localises to the zymogen granule membrane. Its function is as follows. SNAREs, soluble N-ethylmaleimide-sensitive factor-attachment protein receptors, are essential proteins for fusion of cellular membranes. SNAREs localized on opposing membranes assemble to form a trans-SNARE complex, an extended, parallel four alpha-helical bundle that drives membrane fusion. VAMP8 is a SNARE involved in autophagy through the direct control of autophagosome membrane fusion with the lysososome membrane via its interaction with the STX17-SNAP29 binary t-SNARE complex. Also required for dense-granule secretion in platelets. Also plays a role in regulated enzyme secretion in pancreatic acinar cells. Involved in the abscission of the midbody during cell division, which leads to completely separate daughter cells. Involved in the homotypic fusion of early and late endosomes. Also participates in the activation of type I interferon antiviral response through a TRIM6-dependent mechanism. The polypeptide is Vesicle-associated membrane protein 8 (Homo sapiens (Human)).